Here is an 844-residue protein sequence, read N- to C-terminus: 3',5'-cyclic-AMP phosphodiesterase 4A (844 aa).

The interval 1 to 124 is disordered; sequence MEPPAAPSER…RSPLDSQASP (124 aa). Serine 13 carries the phosphoserine modification. Residues 36–46 show a composition bias toward low complexity; the sequence is QPRTPIRIQQR. Residues 51-78 show a composition bias toward basic and acidic residues; that stretch reads SAERSETERSPHRPIERADAVDTGDRPG. The segment covering 82–91 has biased composition (polar residues); it reads TRMSWPSSFH. Serine 147 carries the phosphoserine; by MAPKAPK2 modification. 3 positions are modified to phosphoserine: serine 152, serine 160, and serine 204. Residues 296–317 are disordered; it reads PSPTPRQRAFQQPPPSVLRQSQ. Serine 333 is subject to Phosphoserine. The region spanning 343 to 672 is the PDEase domain; the sequence is VKTDQEDLLA…DWYHSAIRQS (330 aa). Lysine 344 is covalently cross-linked (Glycyl lysine isopeptide (Lys-Gly) (interchain with G-Cter in SUMO)). The active-site Proton donor is the histidine 419. Histidine 419 provides a ligand contact to 3',5'-cyclic AMP. AMP-binding residues include histidine 419 and histidine 423. The Zn(2+) site is built by histidine 423, histidine 459, aspartate 460, and aspartate 577. AMP is bound by residues aspartate 460, aspartate 577, glutamine 628, and phenylalanine 631. Aspartate 460 lines the Mg(2+) pocket. Residue aspartate 460 participates in Mn(2+) binding. 3',5'-cyclic AMP-binding residues include glutamine 628 and phenylalanine 631. 2 disordered regions span residues 668–690 and 818–844; these read AIRQSPSPPLEEEPGGLGHPSLP and SACSGTSGDNSAIISAPGRWGSGGDPA. Phosphoserine is present on residues serine 672 and serine 674. Positions 820–830 are enriched in polar residues; the sequence is CSGTSGDNSAI.

This sequence belongs to the cyclic nucleotide phosphodiesterase family. PDE4 subfamily. Interacts with LYN (via SH3 domain). Interacts with ARRB2. Requires Zn(2+) as cofactor. Mg(2+) is required as a cofactor. Mn(2+) serves as cofactor. Phosphorylated by MAPKAPK2 at Ser-147; it counteracts PKA-induced activation of PDE4A and modulates intracellular cAMP levels. Likely involved in cellular desensitization to cAMP signaling. In terms of processing, proteolytically cleaved by CASP3. In terms of tissue distribution, isoform 2 is testis specific.

It localises to the cytoplasm. It is found in the cytosol. Its subcellular location is the membrane. The enzyme catalyses 3',5'-cyclic AMP + H2O = AMP + H(+). The protein operates within purine metabolism; 3',5'-cyclic AMP degradation; AMP from 3',5'-cyclic AMP: step 1/1. Inhibited by rolipram. Functionally, hydrolyzes the second messenger 3',5'-cyclic AMP (cAMP), which is a key regulator of many important physiological processes. In terms of biological role, efficiently hydrolyzes cAMP. The polypeptide is 3',5'-cyclic-AMP phosphodiesterase 4A (Pde4a) (Rattus norvegicus (Rat)).